Here is a 469-residue protein sequence, read N- to C-terminus: Cyclin-dependent kinase 14 (469 aa).

3 positions are modified to phosphoserine: serine 24, serine 78, and serine 95. The tract at residues 103–133 is disordered; that stretch reads FKSSSAGKESPKVRRHSSPSSPTSPKFGKAD. Serine 134 carries the post-translational modification Phosphoserine. Positions 135–419 constitute a Protein kinase domain; it reads YEKLEKLGEG…AQAALSHEYF (285 aa). Residues 141–149 and lysine 164 contribute to the ATP site; that span reads LGEGSYATV. Aspartate 256 acts as the Proton acceptor in catalysis. A disordered region spans residues 449–469; that stretch reads ESMRAFGKNNSYGKSLSNSKH. The span at 456-469 shows a compositional bias: polar residues; the sequence is KNNSYGKSLSNSKH.

The protein belongs to the protein kinase superfamily. CMGC Ser/Thr protein kinase family. CDC2/CDKX subfamily. As to quaternary structure, found in a complex with LRP6, CCNY and CAPRIN2 during G2/M stage; CAPRIN2 functions as a scaffold for the complex by binding to CCNY via its N terminus and to CDK14 via its C terminus. Interacts with CCNY; CCNY mediates its recruitment to the plasma membrane and promotes phosphorylation of LRP6. Interacts with CCDN3 and CDKN1A. Interacts with SEPT8. Interacts with 14-3-3 proteina YWHAB, YWHAE, YWHAH and YWHAQ. In terms of tissue distribution, in the adult, widely expressed at low levels except in brain, kidney and testis where expression is high. In the brain, detected in cortex, hippocampus, dentate gyrus, amygdala cortex, parasubiculum and cerebellum. In the embryo, expressed predominantly in the nervous system.

It is found in the cell membrane. The protein resides in the cytoplasm. It localises to the nucleus. The catalysed reaction is L-seryl-[protein] + ATP = O-phospho-L-seryl-[protein] + ADP + H(+). The enzyme catalyses L-threonyl-[protein] + ATP = O-phospho-L-threonyl-[protein] + ADP + H(+). With respect to regulation, serine/threonine-protein kinase activity is promoted by associated cyclins CCDN3 and CCNY and repressed by CDKN1A. Its function is as follows. Serine/threonine-protein kinase involved in the control of the eukaryotic cell cycle, whose activity is controlled by an associated cyclin. Acts as a cell-cycle regulator of Wnt signaling pathway during G2/M phase by mediating the phosphorylation of LRP6 at 'Ser-1490', leading to the activation of the Wnt signaling pathway. Acts as a regulator of cell cycle progression and cell proliferation via its interaction with CCDN3. Phosphorylates RB1 in vitro, however the relevance of such result remains to be confirmed in vivo. May also play a role in meiosis, neuron differentiation and may indirectly act as a negative regulator of insulin-responsive glucose transport. The polypeptide is Cyclin-dependent kinase 14 (Cdk14) (Mus musculus (Mouse)).